Reading from the N-terminus, the 147-residue chain is Protein-export protein SecB (147 aa).

The protein belongs to the SecB family. In terms of assembly, homotetramer, a dimer of dimers. One homotetramer interacts with 1 SecA dimer.

It is found in the cytoplasm. Its function is as follows. One of the proteins required for the normal export of preproteins out of the cell cytoplasm. It is a molecular chaperone that binds to a subset of precursor proteins, maintaining them in a translocation-competent state. It also specifically binds to its receptor SecA. The sequence is that of Protein-export protein SecB from Neisseria meningitidis serogroup A / serotype 4A (strain DSM 15465 / Z2491).